We begin with the raw amino-acid sequence, 601 residues long: Terpenoid synthase 17 (601 aa).

5 residues coordinate Mg(2+): asparagine 354, aspartate 358, asparagine 497, threonine 501, and glutamate 505. The DDXXD motif; degenerate motif lies at 354–358; it reads NDTCD.

It belongs to the terpene synthase family. Tpsa subfamily. Mg(2+) is required as a cofactor. It depends on Mn(2+) as a cofactor. As to expression, expressed exclusively in flowers.

It is found in the cytoplasm. Its pathway is secondary metabolite biosynthesis; terpenoid biosynthesis. The polypeptide is Terpenoid synthase 17 (TPS17) (Arabidopsis thaliana (Mouse-ear cress)).